The primary structure comprises 625 residues: Glyco-Gag protein (625 aa).

The Cytoplasmic segment spans residues 1–66; that stretch reads LGDVSEASGA…SVFRRNRAAR (66 aa). Residues 67 to 86 traverse the membrane as a helical segment; the sequence is LVCLSIVLSFVCSLLFWTAS. Residues 87–625 are Extracellular-facing; it reads KNMGQTVTTP…PQTSLLTLDD (539 aa). N-linked (GlcNAc...) asparagine; by host glycosylation is present at Asn113. The tract at residues 195–305 is disordered; the sequence is PSPTAPILPS…STTSRAFPLR (111 aa). N-linked (GlcNAc...) asparagine; by host glycosylation is present at Asn479. 2 stretches are compositionally biased toward basic and acidic residues: residues 522-553 and 573-606; these read ETPEEREERVRRETEEKEERRRAEEEQKEKER and RQDRQGGERRRPQLDKDQCAYCKEKGHWAKDCPK. The tract at residues 522-625 is disordered; sequence ETPEEREERV…PQTSLLTLDD (104 aa).

Post-translationally, glycosylated by host. In terms of processing, cleaved by host near the middle of the molecule, releasing the c-terminal half containing capsid and nucleoprotein domains op GAG.

It is found in the host cell membrane. Functionally, plays a role in viral particle release. Presumably acts by facilitating the fission of the virion bud at the cell surface. May prevent the antiviral activity of murine APOBEC3. In AKV murine leukemia virus (AKR (endogenous) murine leukemia virus), this protein is Glyco-Gag protein.